Reading from the N-terminus, the 73-residue chain is Antimicrobial peptide TsAP-2 (73 aa).

The signal sequence occupies residues 1–22 (MQIKHLITIFFLVLIVADHCHA). K39 is modified (lysine amide). A propeptide spanning residues 45-73 (EITSQIEQYRNLQKREAELENLLANLPVY) is cleaved from the precursor.

The protein belongs to the non-disulfide-bridged peptide (NDBP) superfamily. Short antimicrobial peptide (group 4) family. Expressed by the venom gland.

Its subcellular location is the secreted. In terms of biological role, antimicrobial peptide. Has a high antibacterial activity against the Gram-positive bacterium S.aureus (MIC=5-17.30 uM), the methicillin-resistant S.aureus (MRSA) (MIC=17.30 uM), and E.faecalis (MIC=69.23 uM). Has antifungal activity against Candida spp. and one Cryptococcus neoformans strains with MICs values ranging from 6.25 to 100 uM. Also shows an inhibitory activity on C.albicans biofilms at high concentrations. Has a moderate hemolytic potency (18% at 20 uM). Also inhibits the growth of the five human cancer cell lines tested (the squamous carcinoma cell line H157 (IC(50)=4.1 uM), the lung adenocarcinoma cell line H838 (11.0 uM), the breast carcinoma cell line MCF-7 (6.4 uM), the androgen-independent prostate adenocarcinoma cell line PC3 (13.3 uM) and the glioblastoma cell line U251-MG (15.4 uM)). In the model of polymicrobial sepsis, it exhibits an antibiotic effect, reducing the levels of microorganisms in the infectious focus and the inflammatory responses in the lung and cecum of septic animals. This chain is Antimicrobial peptide TsAP-2, found in Tityus serrulatus (Brazilian scorpion).